A 29-amino-acid polypeptide reads, in one-letter code: Cytolysin Uc-1 (29 aa).

Residues 1–15 (DEQTGSKGPNENLPS) are compositionally biased toward polar residues. The segment at 1 to 29 (DEQTGSKGPNENLPSQKDLXAKASXLTEV) is disordered.

It localises to the secreted. Its subcellular location is the nematocyst. It is found in the target cell membrane. In terms of biological role, pore-forming toxin that lyses bovine erythrocytes at nanomolar concentrations. Is devoid of enzymatic activity. Binds to monolayers and efficiently permeabilizes small lipid vesicles composed of sphingomyelin and cholesterol. The cytolytic activity is not prevented by cholesterol or sphingomyelin. This is Cytolysin Uc-1 from Urticina crassicornis (Mottled anemone).